A 618-amino-acid polypeptide reads, in one-letter code: tRNA 5-methylaminomethyl-2-thiouridine biosynthesis bifunctional protein MnmC (618 aa).

The tRNA (mnm(5)s(2)U34)-methyltransferase stretch occupies residues 1–231; the sequence is MLQTYAPIDF…KRHMLSAVYE (231 aa). The tract at residues 256–618 is FAD-dependent cmnm(5)s(2)U34 oxidoreductase; sequence IGAGIAGATT…KDIIRGHLNN (363 aa).

It in the N-terminal section; belongs to the methyltransferase superfamily. tRNA (mnm(5)s(2)U34)-methyltransferase family. In the C-terminal section; belongs to the DAO family. FAD is required as a cofactor.

The protein localises to the cytoplasm. It catalyses the reaction 5-aminomethyl-2-thiouridine(34) in tRNA + S-adenosyl-L-methionine = 5-methylaminomethyl-2-thiouridine(34) in tRNA + S-adenosyl-L-homocysteine + H(+). Its function is as follows. Catalyzes the last two steps in the biosynthesis of 5-methylaminomethyl-2-thiouridine (mnm(5)s(2)U) at the wobble position (U34) in tRNA. Catalyzes the FAD-dependent demodification of cmnm(5)s(2)U34 to nm(5)s(2)U34, followed by the transfer of a methyl group from S-adenosyl-L-methionine to nm(5)s(2)U34, to form mnm(5)s(2)U34. The protein is tRNA 5-methylaminomethyl-2-thiouridine biosynthesis bifunctional protein MnmC of Dichelobacter nodosus (strain VCS1703A).